The following is a 304-amino-acid chain: Nucleotide-binding protein SH2124 (304 aa).

19–26 (GLSGAGKS) provides a ligand contact to ATP. A GTP-binding site is contributed by 70 to 73 (DLRG).

The protein belongs to the RapZ-like family.

Displays ATPase and GTPase activities. The polypeptide is Nucleotide-binding protein SH2124 (Staphylococcus haemolyticus (strain JCSC1435)).